Consider the following 213-residue polypeptide: Large ribosomal subunit protein uL3 (213 aa).

The protein belongs to the universal ribosomal protein uL3 family. In terms of assembly, part of the 50S ribosomal subunit. Forms a cluster with proteins L14 and L19.

One of the primary rRNA binding proteins, it binds directly near the 3'-end of the 23S rRNA, where it nucleates assembly of the 50S subunit. The polypeptide is Large ribosomal subunit protein uL3 (Petrotoga mobilis (strain DSM 10674 / SJ95)).